A 1208-amino-acid chain; its full sequence is E3 ubiquitin-protein ligase DZIP3 (1208 aa).

Positions 10–29 (VRHPAVEDQRKEETENKLEK) are enriched in basic and acidic residues. 2 disordered regions span residues 10 to 38 (VRHP…NKQE) and 637 to 698 (GTSI…PHSV). Coiled-coil stretches lie at residues 14–43 (AVED…DIPT), 647–676 (ESLK…SKED), 792–853 (IASL…SKLN), and 904–939 (QLKA…KVKQ). Residues 637–647 (GTSIPSESSTE) are compositionally biased toward polar residues. Residues 648-657 (SLKDLQEVKS) show a composition bias toward basic and acidic residues. Over residues 658-669 (KQRKKKKTKNKK) the composition is skewed to basic residues. Basic and acidic residues predominate over residues 670–693 (NKDSKEDQVPYVVEKEEQLRKEQA). The segment at 1088–1145 (KSQSQGKSVSNVNCVSPSHSPSQPDAAQPPKPAWRPLTSQGPATWEGASNPDEEEEEE) is disordered. Polar residues predominate over residues 1089-1112 (SQSQGKSVSNVNCVSPSHSPSQPD). The segment at 1148–1188 (CVICHENLSPENLSVLPCAHKFHAQCIRPWLMQQGTCPTCR) adopts an RING-type; atypical zinc-finger fold.

As to quaternary structure, interacts with DAZ proteins. In terms of tissue distribution, widely expressed at low level. Highly expressed in skeletal muscle, kidney and heart. Expressed at low level in placenta, lung, brain, liver and pancreas.

The protein localises to the cytoplasm. The enzyme catalyses S-ubiquitinyl-[E2 ubiquitin-conjugating enzyme]-L-cysteine + [acceptor protein]-L-lysine = [E2 ubiquitin-conjugating enzyme]-L-cysteine + N(6)-ubiquitinyl-[acceptor protein]-L-lysine.. Its pathway is protein modification; protein ubiquitination. Its function is as follows. E3 Ubiquitin ligase proteins mediate ubiquitination and subsequent proteasomal degradation of target proteins. E3 ubiquitin ligases accept ubiquitin from an E2 ubiquitin-conjugating enzyme in the form of a thioester and then directly transfers the ubiquitin to targeted substrates. Able to specifically bind RNA. This Homo sapiens (Human) protein is E3 ubiquitin-protein ligase DZIP3 (DZIP3).